The following is a 166-amino-acid chain: Putative membrane protein 164 (166 aa).

Over 1–4 (MYHP) the chain is Intravirion. Residues 5 to 25 (VVQVLIGLILVIILILGFYHL) form a helical membrane-spanning segment. Over 26–166 (KKKSCKTDTD…TIMGIARNIL (141 aa)) the chain is Virion surface.

It belongs to the asfivirus envelope protein p22 family.

The protein resides in the virion membrane. It is found in the host cell membrane. The sequence is that of Putative membrane protein 164 from Ornithodoros (relapsing fever ticks).